A 443-amino-acid polypeptide reads, in one-letter code: Thymidine phosphorylase (443 aa).

Belongs to the thymidine/pyrimidine-nucleoside phosphorylase family. In terms of assembly, homodimer.

The catalysed reaction is thymidine + phosphate = 2-deoxy-alpha-D-ribose 1-phosphate + thymine. It participates in pyrimidine metabolism; dTMP biosynthesis via salvage pathway; dTMP from thymine: step 1/2. Its function is as follows. The enzymes which catalyze the reversible phosphorolysis of pyrimidine nucleosides are involved in the degradation of these compounds and in their utilization as carbon and energy sources, or in the rescue of pyrimidine bases for nucleotide synthesis. The chain is Thymidine phosphorylase from Aeromonas salmonicida (strain A449).